The sequence spans 628 residues: Choline transporter-like protein 2 (628 aa).

Residues 1–31 (MSSEDLQDHHEIGNEVIKKKGVYTKKKCQDC) lie on the Cytoplasmic side of the membrane. A helical membrane pass occupies residues 32 to 52 (FFLILFLLFWAGMIVVAAFGV). Residues 53 to 204 (KNGKPDRIVK…EILTDLTNSW (152 aa)) lie on the Extracellular side of the membrane. N-linked (GlcNAc...) asparagine glycosylation is found at Asn-82, Asn-118, Asn-146, and Asn-168. A helical transmembrane segment spans residues 205-225 (RYLIYGALIAMGLGLTWIFLL). A topological domain (cytoplasmic) is located at residue Arg-226. The helical transmembrane segment at 227–247 (FFAGFITWLTVFAAYACLGLL) threads the bilayer. Topologically, residues 248-282 (TAQVYFQWQDSKDAYENTIPSQRLVMQEKNILALK) are extracellular. The helical transmembrane segment at 283–303 (VIFIILCVVCGIFALILLALF) threads the bilayer. Residues 304–319 (SRIRIAIRIIKECSRA) are Cytoplasmic-facing. Residues 320 to 340 (IGIMPSIFFFPIFIFLLLCGF) traverse the membrane as a helical segment. Topologically, residues 341–381 (TVYWVYIGVYLATAGSPTYDDQYRFTGYEADSKLQKIQIYH) are extracellular. Residues 382–402 (FFGYLWTFAFILALNQTTIAG) form a helical membrane-spanning segment. Residues 403 to 432 (AISSWYWVQDKKDTPFFPVWSSFFRVIRYH) lie on the Cytoplasmic side of the membrane. The chain crosses the membrane as a helical span at residues 433-453 (LGSIALGSLILAIVQFIRWVL). Over 454–530 (RFLEKKFKGK…RVAAVNLVSS (77 aa)) the chain is Extracellular. Residues 531–551 (FLMFLGRVFITAATVGISLYL) form a helical membrane-spanning segment. The Cytoplasmic segment spans residues 552–559 (LKEHENLS). The chain crosses the membrane as a helical span at residues 560-580 (FYIIPVILIGFIAFAISTGFM). The Extracellular segment spans residues 581–628 (SVYDMSIDTMLLCFCEDCERNDGSPERPYYMSKSLRKFVDGKGRSKCC).

The protein belongs to the CTL (choline transporter-like) family.

The protein resides in the cell membrane. It is found in the mitochondrion outer membrane. The catalysed reaction is choline(out) + n H(+)(in) = choline(in) + n H(+)(out). The enzyme catalyses ethanolamine(out) + n H(+)(in) = ethanolamine(in) + n H(+)(out). In terms of biological role, choline/H+ antiporter, mainly in mitochodria. Also acts as a low-affinity ethanolamine/H+ antiporter, regulating the supply of extracellular ethanolamine (Etn) for the CDP-Etn pathway, redistribute intracellular Etn and balance the CDP-Cho and CDP-Etn arms of the Kennedy pathway. In Dictyostelium discoideum (Social amoeba), this protein is Choline transporter-like protein 2 (slc44a2).